A 190-amino-acid polypeptide reads, in one-letter code: uncharacterized protein (190 aa).

Belongs to the Iojap/RsfS family.

This is an uncharacterized protein from Caenorhabditis elegans.